Here is a 300-residue protein sequence, read N- to C-terminus: N-acetylmuramic acid 6-phosphate etherase (300 aa).

An SIS domain is found at 57–220 (IAVAFQSGGR…TTGAMIRTGK (164 aa)). Glu85 (proton donor) is an active-site residue. The active site involves Glu116.

Belongs to the GCKR-like family. MurNAc-6-P etherase subfamily. As to quaternary structure, homodimer.

It carries out the reaction N-acetyl-D-muramate 6-phosphate + H2O = N-acetyl-D-glucosamine 6-phosphate + (R)-lactate. The protein operates within amino-sugar metabolism; 1,6-anhydro-N-acetylmuramate degradation. It participates in amino-sugar metabolism; N-acetylmuramate degradation. Its pathway is cell wall biogenesis; peptidoglycan recycling. Its function is as follows. Specifically catalyzes the cleavage of the D-lactyl ether substituent of MurNAc 6-phosphate, producing GlcNAc 6-phosphate and D-lactate. Together with AnmK, is also required for the utilization of anhydro-N-acetylmuramic acid (anhMurNAc) either imported from the medium or derived from its own cell wall murein, and thus plays a role in cell wall recycling. The protein is N-acetylmuramic acid 6-phosphate etherase of Aliivibrio fischeri (strain ATCC 700601 / ES114) (Vibrio fischeri).